Here is a 170-residue protein sequence, read N- to C-terminus: Ribosome maturation factor RimM (170 aa).

One can recognise a PRC barrel domain in the interval 98–170; it reads PDEYYWVDLE…LIVVDWDPDF (73 aa).

This sequence belongs to the RimM family. In terms of assembly, binds ribosomal protein uS19.

The protein resides in the cytoplasm. Functionally, an accessory protein needed during the final step in the assembly of 30S ribosomal subunit, possibly for assembly of the head region. Essential for efficient processing of 16S rRNA. May be needed both before and after RbfA during the maturation of 16S rRNA. It has affinity for free ribosomal 30S subunits but not for 70S ribosomes. This Xanthomonas axonopodis pv. citri (strain 306) protein is Ribosome maturation factor RimM.